An 868-amino-acid polypeptide reads, in one-letter code: Ionotropic receptor 93a (868 aa).

Residues 1 to 28 form the signal peptide; that stretch reads MNPGEMRPSACLLLLAGLQLSILVPTEA. Over 29 to 565 the chain is Extracellular; that stretch reads NDFSSFLSAN…ITRKPDEVSR (537 aa). 8 N-linked (GlcNAc...) asparagine glycosylation sites follow: N38, N205, N294, N305, N432, N475, N499, and N543. Residues 566–586 form a helical membrane-spanning segment; sequence IYLFTAPFTVETWFCLMGIIL. Residues 587–642 are Cytoplasmic-facing; that stretch reads LTAPTLYAINRLAPLKEMRIVGLSTVKSCFWYIFGALLQQGGMYLPTADSGRLVVG. The helical transmembrane segment at 643–663 threads the bilayer; sequence FWWIVVIVLVTTYCGNLVAFL. The Extracellular portion of the chain corresponds to 664–832; the sequence is TFPKFQPGVD…HKVNMDDMQG (169 aa). N-linked (GlcNAc...) asparagine glycosylation is present at N691. The chain crosses the membrane as a helical span at residues 833-853; sequence CFLVLLLGFTLALLIVCGEFW. The Cytoplasmic segment spans residues 854-868; sequence YRRFRASRKRRQFTN.

The protein belongs to the glutamate-gated ion channel (TC 1.A.10.1) family. In the antenna, detected in sacculus neurons which innervate the first and second chambers (at protein level). Expressed in multiple cells of the larval dorsal organ ganglion, including the dorsal organ cool cells where it is predominately localized to the dendritic bulbs (at protein level).

Its subcellular location is the cell membrane. Functionally, integral part of various neural sensory systems in the antenna that provide the neural basis for the response to environmental changes in temperature (thermosensation) and humidity (hygrosensation). Together with Ir21a and Ir25a, mediates the response of the larval dorsal organ cool cells, a trio of cool-responsive neurons, to cooling and is required for cool avoidance behavior. Together with Ir25a and Ir40a, mediates the response of the hydrosensory sacculus neurons to changes in relative humidity, and is required for dry detection and humidiy preference behavior. The protein is Ionotropic receptor 93a of Drosophila melanogaster (Fruit fly).